We begin with the raw amino-acid sequence, 481 residues long: Probable cytosol aminopeptidase (481 aa).

Positions 247 and 252 each coordinate Mn(2+). The active site involves lysine 259. 3 residues coordinate Mn(2+): aspartate 270, aspartate 329, and glutamate 331. Arginine 333 is an active-site residue.

The protein belongs to the peptidase M17 family. Requires Mn(2+) as cofactor.

The protein localises to the cytoplasm. The catalysed reaction is Release of an N-terminal amino acid, Xaa-|-Yaa-, in which Xaa is preferably Leu, but may be other amino acids including Pro although not Arg or Lys, and Yaa may be Pro. Amino acid amides and methyl esters are also readily hydrolyzed, but rates on arylamides are exceedingly low.. It catalyses the reaction Release of an N-terminal amino acid, preferentially leucine, but not glutamic or aspartic acids.. Functionally, presumably involved in the processing and regular turnover of intracellular proteins. Catalyzes the removal of unsubstituted N-terminal amino acids from various peptides. The sequence is that of Probable cytosol aminopeptidase from Clostridium tetani (strain Massachusetts / E88).